A 463-amino-acid chain; its full sequence is Histone acetyltransferase mst1 (463 aa).

In terms of domain architecture, Tudor-knot spans 22–74 (VYKSKVFAFKDGEYRKAEILMIQKRTRGVVYYVHYNDYNKRLDEWITIDNIDL). Positions 76-145 (KGIEYPPPEK…GSNAGNESLP (70 aa)) are disordered. Over residues 87 to 99 (KKAHGKGKSSKRP) the composition is skewed to basic residues. A compositionally biased stretch (low complexity) spans 111 to 121 (PSKTEPSTPST). The 273-residue stretch at 179–451 (ARIRNINKIC…NGDLLADWQP (273 aa)) folds into the MYST-type HAT domain. Residues 212 to 237 (VYICSFCFCYYGSERQFQRHREKCTL) form a C2HC MYST-type zinc finger. Residues 262–283 (RTWCRNICLLSKLFLDHKMLYY) carry the ESA1-RPD3 motif motif. Lysine 279 carries the post-translational modification N6-acetyllysine; by autocatalysis. Acetyl-CoA-binding positions include 320 to 324 (ACILT) and 329 to 335 (QRHGYGK). Residue glutamate 355 is the Proton donor/acceptor of the active site. Residue serine 359 participates in acetyl-CoA binding.

This sequence belongs to the MYST (SAS/MOZ) family. As to quaternary structure, component of the NuA4 histone acetyltransferase complex. Interacts with arp4. In terms of processing, autoacetylation at Lys-279 is required for proper function.

The protein localises to the nucleus. Its subcellular location is the chromosome. The catalysed reaction is L-lysyl-[histone] + acetyl-CoA = N(6)-acetyl-L-lysyl-[histone] + CoA + H(+). The enzyme catalyses L-lysyl-[protein] + acetyl-CoA = N(6)-acetyl-L-lysyl-[protein] + CoA + H(+). It catalyses the reaction 2-hydroxyisobutanoyl-CoA + L-lysyl-[protein] = N(6)-(2-hydroxyisobutanoyl)-L-lysyl-[protein] + CoA + H(+). It carries out the reaction (2E)-butenoyl-CoA + L-lysyl-[protein] = N(6)-(2E)-butenoyl-L-lysyl-[protein] + CoA + H(+). In terms of biological role, catalytic component of the NuA4 histone acetyltransferase (HAT) complex which is involved in epigenetic transcriptional activation of selected genes principally by acetylation of nucleosomal histones H4, H3, H2B, H2A and H2A variant H2A.Z. Acetylates histone H4 to form H4K5ac, H4K8ac, H4K12ac and H4K16ac, histone H3 to form H3K14ac, and histone H2A to form H2AK4ac and H2AK7ac. The NuA4 complex is involved in the DNA damage response and is required for chromosome segregation. The NuA4 complex plays a direct role in repair of DNA double-strand breaks (DSBs) through homologous recombination. Recruitment to promoters depends on H3K4me. Also acetylates non-histone proteins. In addition to protein acetyltransferase, can use different acyl-CoA substrates, such as 2-hydroxyisobutanoyl-CoA (2-hydroxyisobutyryl-CoA) or (2E)-butenoyl-CoA (crotonyl-CoA), and is able to mediate protein 2-hydroxyisobutyrylation and crotonylation, respectively. The polypeptide is Histone acetyltransferase mst1 (Schizosaccharomyces pombe (strain 972 / ATCC 24843) (Fission yeast)).